The following is a 204-amino-acid chain: Lymphotoxin-alpha (204 aa).

The signal sequence occupies residues 1-33; it reads MTPPGRLYLLRVRSAPVLLLLGLLLGLPPGAQG. The THD domain occupies 62–204; sequence PAAHLIGDPS…SSVFFGAFAL (143 aa). Asn-95 is a glycosylation site (N-linked (GlcNAc...) asparagine). Cys-119 and Cys-155 are disulfide-bonded.

This sequence belongs to the tumor necrosis factor family. In terms of assembly, homotrimer, and heterotrimer of either two LTB and one LTA subunits or (less prevalent) two LTA and one LTB subunits. Interacts with TNFRSF14.

The protein resides in the secreted. Its subcellular location is the membrane. In terms of biological role, cytokine that in its homotrimeric form binds to TNFRSF1A/TNFR1, TNFRSF1B/TNFBR and TNFRSF14/HVEM. In its heterotrimeric form with LTB binds to TNFRSF3/LTBR. Lymphotoxin is produced by lymphocytes and is cytotoxic for a wide range of tumor cells in vitro and in vivo. This chain is Lymphotoxin-alpha (LTA), found in Canis lupus familiaris (Dog).